The primary structure comprises 366 residues: Chorismate synthase (366 aa).

2 residues coordinate NADP(+): arginine 48 and arginine 54. FMN contacts are provided by residues 125-127 (RSS), 241-242 (NA), glycine 285, 300-304 (KPTSS), and arginine 326.

The protein belongs to the chorismate synthase family. In terms of assembly, homotetramer. The cofactor is FMNH2.

It carries out the reaction 5-O-(1-carboxyvinyl)-3-phosphoshikimate = chorismate + phosphate. It functions in the pathway metabolic intermediate biosynthesis; chorismate biosynthesis; chorismate from D-erythrose 4-phosphate and phosphoenolpyruvate: step 7/7. Its function is as follows. Catalyzes the anti-1,4-elimination of the C-3 phosphate and the C-6 proR hydrogen from 5-enolpyruvylshikimate-3-phosphate (EPSP) to yield chorismate, which is the branch point compound that serves as the starting substrate for the three terminal pathways of aromatic amino acid biosynthesis. This reaction introduces a second double bond into the aromatic ring system. The protein is Chorismate synthase of Cereibacter sphaeroides (strain ATCC 17023 / DSM 158 / JCM 6121 / CCUG 31486 / LMG 2827 / NBRC 12203 / NCIMB 8253 / ATH 2.4.1.) (Rhodobacter sphaeroides).